A 221-amino-acid polypeptide reads, in one-letter code: H-2 class II histocompatibility antigen, A-Q alpha chain (221 aa).

The alpha-1 stretch occupies residues Gly1 to Asn76. At Gly1–Glu183 the chain is on the extracellular side. Residues Glu77–Trp170 are alpha-2. One can recognise an Ig-like C1-type domain in the interval Pro79–Glu171. Residues Cys99 and Cys155 are joined by a disulfide bond. Asn110 carries an N-linked (GlcNAc...) asparagine glycan. The interval Glu171 to Glu183 is connecting peptide. The chain crosses the membrane as a helical span at residues Thr184 to Leu209. At Arg210 to Leu221 the chain is on the cytoplasmic side.

The protein belongs to the MHC class II family.

It is found in the membrane. The chain is H-2 class II histocompatibility antigen, A-Q alpha chain (H2-Aa) from Mus musculus (Mouse).